A 129-amino-acid chain; its full sequence is Small ribosomal subunit protein uS11 (129 aa).

This sequence belongs to the universal ribosomal protein uS11 family. Part of the 30S ribosomal subunit. Interacts with proteins S7 and S18. Binds to IF-3.

Located on the platform of the 30S subunit, it bridges several disparate RNA helices of the 16S rRNA. Forms part of the Shine-Dalgarno cleft in the 70S ribosome. The polypeptide is Small ribosomal subunit protein uS11 (Lactobacillus delbrueckii subsp. bulgaricus (strain ATCC 11842 / DSM 20081 / BCRC 10696 / JCM 1002 / NBRC 13953 / NCIMB 11778 / NCTC 12712 / WDCM 00102 / Lb 14)).